A 327-amino-acid chain; its full sequence is Zinc transport protein ZntB (327 aa).

Residues 1 to 271 (MESFAGKELQ…AMNRRTYTMS (271 aa)) are Cytoplasmic-facing. The chain crosses the membrane as a helical span at residues 272–292 (LLAMVFLPTTFLTGLFGVNLG). At 293 to 300 (GIPGGDAP) the chain is on the periplasmic side. Residues 301–321 (FGFFTFCLMLVILVGGVAWWL) form a helical membrane-spanning segment. The Cytoplasmic portion of the chain corresponds to 322–327 (KRSKWL).

It belongs to the CorA metal ion transporter (MIT) (TC 1.A.35) family.

It localises to the cell inner membrane. The catalysed reaction is Zn(2+)(out) + H(+)(out) = Zn(2+)(in) + H(+)(in). Functionally, zinc transporter. Acts as a Zn(2+):proton symporter, which likely mediates zinc ion uptake. The sequence is that of Zinc transport protein ZntB from Pectobacterium atrosepticum (strain SCRI 1043 / ATCC BAA-672) (Erwinia carotovora subsp. atroseptica).